Consider the following 348-residue polypeptide: 4-hydroxyphenylpyruvate dioxygenase (348 aa).

VOC domains lie at 11-141 and 151-303; these read GFAF…ITSP and AIDH…IFTE. Fe cation contacts are provided by His-154, His-232, and Glu-312.

This sequence belongs to the 4HPPD family. Requires Fe cation as cofactor.

The catalysed reaction is 3-(4-hydroxyphenyl)pyruvate + O2 = homogentisate + CO2. Its function is as follows. Catalyzes the transformation of p-hydroxyphenylpyruvate into HGA. Has hemolytic and brown pigment production activity. This chain is 4-hydroxyphenylpyruvate dioxygenase (lly), found in Legionella pneumophila subsp. pneumophila (strain Philadelphia 1 / ATCC 33152 / DSM 7513).